The following is a 6631-amino-acid chain: Replicase polyprotein 1ab (6631 aa).

The Cytoplasmic segment spans residues 1–1752 (MASSLKQGVS…VSSYKIVLCK (1752 aa)). Ubiquitin-like domains are found at residues 675–780 (KTVT…RDYE) and 1177–1229 (CKQK…ILFI). A Macro domain is found at 1005–1181 (VKPATCEKPK…YFDATCKQKT (177 aa)). The region spanning 1238 to 1499 (EYYGLDAQKY…AKVVKEDVSN (262 aa)) is the Peptidase C16 domain. The active-site For PL-PRO activity is Cys-1276. A C4-type; degenerate zinc finger spans residues 1355–1392 (CNCGVKSYELRGLEACIQPVRAPNLLHFKTQYSNCPTC). Active-site for PL-PRO activity residues include His-1439 and Asp-1450. A helical membrane pass occupies residues 1753-1773 (VVFATLLIVWFIYTSNPVVFT). The interval 1753-1866 (VVFATLLIVW…KPVAGFVIIC (114 aa)) is HD1. The 65-residue stretch at 1771 to 1835 (VFTGIRVLDF…AYSVEQIYKD (65 aa)) folds into the 3Ecto domain. Residues 1774-1845 (GIRVLDFLFE…AASGINFNWN (72 aa)) lie on the Lumenal side of the membrane. Cystine bridges form between Cys-1787-Cys-1813 and Cys-1804-Cys-1810. A helical membrane pass occupies residues 1846 to 1866 (WLYLVFLILFVKPVAGFVIIC). Over 1867–2282 (YCVKYLVLSS…TFKWFMSCFK (416 aa)) the chain is Cytoplasmic. Residues 1913-2003 (YVQVHHILYC…KLKRHVKPTA (91 aa)) form a Y1 region. One can recognise a CoV Nsp3 Y domain in the interval 1913 to 2265 (YVQVHHILYC…HTQKLLVEKK (353 aa)). 8 residues coordinate Zn(2+): His-1917, Cys-1922, Cys-1927, Cys-1930, Cys-1963, His-1966, Cys-1970, and Cys-1973. A ZF1 region spans residues 1917-1930 (HHILYCKDVTCEVC). A ZF2 region spans residues 1963–1973 (CKRHNWYCRNC). A Y2 region spans residues 2004-2106 (YAYHVVYEAC…ILDQALYEQL (103 aa)). Residues 2004–2265 (YAYHVVYEAC…HTQKLLVEKK (262 aa)) form a coV-Y region. A Y3 region spans residues 2107–2165 (IVEPVSKSVIDKVCSILSNIISVDTAALNYKAGTLRDALLSITKDEEAVDMAIFCHNHE). Residues 2166-2265 (VEYTGDGFTN…HTQKLLVEKK (100 aa)) form a Y4 region. Residues 2283-2303 (WLFVFYILFTACCLGYYYMEM) traverse the membrane as a helical segment. The HD2 stretch occupies residues 2283 to 2666 (WLFVFYILFT…LACCYLGFIL (384 aa)). Over 2304-2561 (NKSFVHPMYD…FFTGVNPNIY (258 aa)) the chain is Lumenal. A helical transmembrane segment spans residues 2562–2582 (IQLATMFLILVVIVLIFAMVI). Over 2583-2613 (KFQGVFKAYATIVFTIMLVWVINAFVLCVHS) the chain is Cytoplasmic. The chain crosses the membrane as a helical span at residues 2614 to 2634 (YNSVLAVILLVLYCYASMVTS). The Lumenal portion of the chain corresponds to 2635-2645 (RNTAIIMHCWL). A helical transmembrane segment spans residues 2646–2666 (VFTFGLIVPTWLACCYLGFIL). The Cytoplasmic segment spans residues 2667-3098 (YMYTPLVFWC…SSFVRKATSW (432 aa)). Positions 2686 to 2781 (LYDGNEFVGN…RYSIGVSRLQ (96 aa)) constitute a Nsp4C domain. The region spanning 2782–3088 (AGFKKLVSPS…FNQVGGVRLQ (307 aa)) is the Peptidase C30 domain. Active-site for 3CL-PRO activity residues include His-2822 and Cys-2924. A helical membrane pass occupies residues 3099–3119 (FWSRCVLACFLFVLCAIVLFT). The segment at 3099-3319 (FWSRCVLACF…WLCTCYFGLY (221 aa)) is HD3. Topologically, residues 3120-3123 (AVPL) are lumenal. A helical transmembrane segment spans residues 3124–3144 (KFYVHAAVILLMAVLFISFTV). Residues 3145 to 3153 (KHVMAYMDT) are Cytoplasmic-facing. A helical transmembrane segment spans residues 3154–3174 (FLLPTLITVIIGVCAEVPFIY). Residues 3175-3190 (NTLISQVVIFLSQWYD) are Lumenal-facing. A helical membrane pass occupies residues 3191-3211 (PVVFDTMVPWMLLPLVLYTAF). The Cytoplasmic portion of the chain corresponds to 3212–3259 (KCVQGCYMNSFNTSLLMLYQFMKLGFVIYTSSNTLTAYTEGNWELFFE). Residues 3260 to 3280 (LVHTIVLANVSSNSLIGLIVF) traverse the membrane as a helical segment. The Lumenal segment spans residues 3281–3298 (KCAKWMLYYCNATYFNNY). Residues 3299–3319 (VLMAVMVNGIGWLCTCYFGLY) traverse the membrane as a helical segment. At 3320–6631 (WWVNKVFGLT…FTSDSFVCTM (3312 aa)) the chain is on the cytoplasmic side. A RdRp Nsp7 cofactor domain is found at 3382-3464 (SKLSDVKCTT…DILKRSTVLQ (83 aa)). The RdRp Nsp8 cofactor domain maps to 3465–3674 (SVTQEFSHIP…GHNKVDVALQ (210 aa)). A Nsp9 ssRNA-binding domain is found at 3675-3785 (NNELMPHGVK…GAISNVVVLQ (111 aa)). One can recognise an ExoN/MTase coactivator domain in the interval 3787–3928 (KGHETEEVDA…CDSLRQPKPS (142 aa)). Cys-3860, Cys-3863, His-3869, Cys-3880, Cys-3906, Cys-3909, Cys-3917, and Cys-3919 together coordinate Zn(2+). Zinc fingers lie at residues 3860 to 3880 (CLYC…DGRC) and 3906 to 3919 (CTVC…GCQC). Residues 3942-4200 (YLNRVRGSSE…APERYFEYDV (259 aa)) form the NiRAN domain. The Nsp12 Interface domain maps to 4205–4303 (KSYDLLKYDY…MNQDNTMSFS (99 aa)). Positions 4234, 4240, 4245, 4249, and 4426 each coordinate Zn(2+). The region spanning 4304 to 4870 (KMGLSQLMQF…NMYRAPTTLQ (567 aa)) is the Nsp12 RNA-dependent RNA polymerase domain. The interval 4306 to 4519 (GLSQLMQFVG…HQKILKSIVN (214 aa)) is rdRp Fingers N-ter. The tract at residues 4520-4558 (TRNAPVVIGTTKFYGGWDNMLRNLIQGVEDPILMGWDYP) is rdRp Palm N-ter. The 163-residue stretch at 4550 to 4712 (PILMGWDYPK…CYNNTLAKQG (163 aa)) folds into the RdRp catalytic domain. Positions 4559-4617 (KCDRAMPNLLRIAASLVLARKHTNCCTWSERVYRLYNECAQVLSETVLATGGIYVKPGG) are rdRp Fingers C-ter. Zn(2+)-binding residues include His-4580, Cys-4583, and Cys-4584. A rdRp Palm C-ter region spans residues 4618–4753 (TSSGDATTAY…EKGPHEFCSQ (136 aa)). Active-site residues include Ser-4697, Asp-4698, and Asp-4699. A rdRp Thumb region spans residues 4754-4870 (HTMLVEVDGE…NMYRAPTTLQ (117 aa)). The region spanning 4871-4983 (SCGVCVVCNS…DDFNQLATTN (113 aa)) is the CV ZBD domain. The Zn(2+) site is built by Cys-4875, Cys-4878, Cys-4886, Cys-4889, Cys-4896, Cys-4899, His-4903, His-4909, Cys-4920, Cys-4925, Cys-4942, and His-4945. In terms of domain architecture, (+)RNA virus helicase ATP-binding spans 5127–5307 (MVPACFVNNI…MVCVKPDIFL (181 aa)). 5152–5159 (GPPGSGKS) is a binding site for ATP. The region spanning 5308 to 5479 (AKCYRCPKEI…QGTGLFKICN (172 aa)) is the (+)RNA virus helicase C-terminal domain. The 215-residue stretch at 5541–5755 (MFITRDEAIR…RCLAINNAFC (215 aa)) folds into the ExoN domain. Active-site residues include Asp-5559, Glu-5561, and Glu-5660. The Zn(2+) site is built by Cys-5676, Cys-5678, Cys-5694, His-5697, His-5725, Cys-5729, and His-5732. Active-site residues include His-5736 and Asp-5741. Cys-5747 contributes to the Zn(2+) binding site. Residues 5764-5991 (YPHIANEDEV…NLWKSFSALQ (228 aa)) enclose the N7-MTase domain. 5799 to 5805 (DIGNPKG) is an S-adenosyl-L-methionine binding site. The tract at residues 5879-5893 (CNGGSLYVNKHAFHT) is gpppA-binding. Zn(2+) is bound by residues Cys-5917, Cys-5937, Cys-5948, and His-5951. A Nsp15 N-terminal oligomerization domain is found at 5992 to 6052 (SIDNIAYNMY…SVAFELYAKR (61 aa)). Residues 6053 to 6168 (NIRTLPNNRI…VYKRVNGAFV (116 aa)) enclose the AV-Nsp11N/CoV-Nsp15M domain. A NendoU domain is found at 6185 to 6326 (EPRSDVERDF…EDGIIKTCYP (142 aa)). Active-site residues include His-6214, His-6229, Lys-6269, Lys-6373, Asp-6457, Lys-6501, and Glu-6534. Positions 6329–6628 (QSAWTCGYNM…NTSFTSDSFV (300 aa)) constitute a Nidovirus-type SAM-dependent 2'-O-MTase domain.

Belongs to the coronaviruses polyprotein 1ab family. In terms of assembly, interacts with host PHB and PHB2. Interacts with papain-like protease and non-structural protein 6. As to quaternary structure, monomer. Homodimer. Only the homodimer shows catalytic activity. In terms of assembly, eight copies of nsp7 and eight copies of nsp8 assemble to form a heterohexadecamer dsRNA-encircling ring structure. Eight copies of nsp7 and eight copies of nsp8 assemble to form a heterohexadecamer dsRNA-encircling ring structure. Interacts with ORF6 protein. As to quaternary structure, homodimer. In terms of assembly, homododecamer. Interacts with proofreading exoribonuclease nsp14 and 2'-O-methyltransferase nsp16; these interactions enhance nsp14 and nsp16 enzymatic activities. Interacts with host DDX1 (via C-terminus). Interacts with non-structural protein 10. As to quaternary structure, homohexamer. In terms of assembly, interacts with non-structural protein 10. Requires Mn(2+) as cofactor. It depends on Zn(2+) as a cofactor. In terms of processing, specific enzymatic cleavages in vivo by its own proteases yield mature proteins. 3C-like proteinase nsp5 liberates nsps 6-16 from the polyprotein. Papain-like and 3C-like proteinases are autocatalytically processed. N-glycosylated.

It localises to the host endoplasmic reticulum membrane. The protein localises to the host cytoplasm. It is found in the host perinuclear region. Its subcellular location is the host endoplasmic reticulum. The protein resides in the host endoplasmic reticulum-Golgi intermediate compartment. The catalysed reaction is Thiol-dependent hydrolysis of ester, thioester, amide, peptide and isopeptide bonds formed by the C-terminal Gly of ubiquitin (a 76-residue protein attached to proteins as an intracellular targeting signal).. The enzyme catalyses RNA(n) + a ribonucleoside 5'-triphosphate = RNA(n+1) + diphosphate. It catalyses the reaction ATP + H2O = ADP + phosphate + H(+). It carries out the reaction a 5'-end diphospho-ribonucleoside in mRNA + GTP + H(+) = a 5'-end (5'-triphosphoguanosine)-ribonucleoside in mRNA + diphosphate. The catalysed reaction is uridylyl-uridylyl-ribonucleotide-RNA = a 3'-end uridylyl-2',3'-cyclophospho-uridine-RNA + a 5'-end dephospho-ribonucleoside-RNA. The enzyme catalyses a 5'-end (N(7)-methyl 5'-triphosphoguanosine)-ribonucleoside in mRNA + S-adenosyl-L-methionine = a 5'-end (N(7)-methyl 5'-triphosphoguanosine)-(2'-O-methyl-ribonucleoside) in mRNA + S-adenosyl-L-homocysteine + H(+). In terms of biological role, multifunctional protein involved in the transcription and replication of viral RNAs. Contains the proteinases responsible for the cleavages of the polyprotein. May play a role in the modulation of host cell survival signaling pathway by interacting with host PHB and PHB2. Indeed, these two proteins play a role in maintaining the functional integrity of the mitochondria and protecting cells from various stresses. Its function is as follows. Responsible for the cleavages located at the N-terminus of the replicase polyprotein. In addition, PL-PRO possesses a deubiquitinating/deISGylating activity and processes both 'Lys-48'- and 'Lys-63'-linked polyubiquitin chains from cellular substrates. Functionally, plays a role in host membrane rearrangement that leads to creation of cytoplasmic double-membrane vesicles (DMV) necessary for viral replication. Alone is able to induce paired membranes. Coexpression of nsp3 and nsp4 does not result in the formation of DMVs. In terms of biological role, responsible for the majority of cleavages as it cleaves the C-terminus of replicase polyprotein at 11 sites. Recognizes substrates containing the core sequence [ILMVF]-Q-|-[SGACN]. Inhibited by the substrate-analog Cbz-Val-Asn-Ser-Thr-Leu-Gln-CMK. Forms a hexadecamer with nsp8 (8 subunits of each) that may participate in viral replication by acting as a primase. Alternatively, may synthesize substantially longer products than oligonucleotide primers. Its function is as follows. Forms a hexadecamer with nsp7 (8 subunits of each) that may participate in viral replication by acting as a primase. Alternatively, may synthesize substantially longer products than oligonucleotide primers. Functionally, forms a primer, NSP9-pU, which is utilized by the polymerase for the initiation of RNA chains. Interacts with ribosome signal recognition particle RNA (SRP). Together with NSP8, suppress protein integration into the cell membrane, thereby disrupting host immune defenses. In terms of biological role, plays a pivotal role in viral transcription by stimulating both nsp14 3'-5' exoribonuclease and nsp16 2'-O-methyltransferase activities. Therefore plays an essential role in viral mRNAs cap methylation. RNA-directed RNA polymerase that catalyzes the transcription of viral genomic and subgenomic RNAs. Acts in complex with nsp7 and nsp8 to transcribe both the minus and positive strands of genomic RNA. The kinase-like NiRAN domain of NSP12 attaches one or more nucleotides to the amino terminus of NSP9, forming a covalent RNA-protein intermediate that serves as transcription/replication primer. Subgenomic RNAs (sgRNAs) are formed by discontinuous transcription: The polymerase has the ability to pause at transcription-regulating sequences (TRS) and jump to the leader TRS, resulting in a major deletion. This creates a series of subgenomic RNAs that are replicated, transcribed and translated. In addition, Nsp12 is a subunit of the viral RNA capping enzyme that catalyzes the RNA guanylyltransferase reaction for genomic and sub-genomic RNAs. Subsequently, the NiRAN domain transfers RNA to GDP, and forms the core cap structure GpppA-RNA. Its function is as follows. Multi-functional protein with a zinc-binding domain in N-terminus displaying RNA and DNA duplex-unwinding activities with 5' to 3' polarity. Activity of helicase is dependent on magnesium. Functionally, enzyme possessing two different activities: an exoribonuclease activity acting on both ssRNA and dsRNA in a 3' to 5' direction and a N7-guanine methyltransferase activity. Acts as a proofreading exoribonuclease for RNA replication, thereby lowering The sensitivity of the virus to RNA mutagens. In terms of biological role, plays a role in viral transcription/replication and prevents the simultaneous activation of host cell dsRNA sensors, such as MDA5/IFIH1, OAS, and PKR. Acts by degrading the 5'-polyuridines generated during replication of the poly(A) region of viral genomic and subgenomic RNAs. Catalyzes a two-step reaction in which a 2'3'-cyclic phosphate (2'3'-cP) is first generated by 2'-O transesterification, which is then hydrolyzed to a 3'-phosphate (3'-P). If not degraded, poly(U) RNA would hybridize with poly(A) RNA tails and activate host dsRNA sensors. Methyltransferase that mediates mRNA cap 2'-O-ribose methylation to the 5'-cap structure of viral mRNAs. N7-methyl guanosine cap is a prerequisite for binding of nsp16. Therefore plays an essential role in viral mRNAs cap methylation which is essential to evade immune system. This Gallus gallus (Chicken) protein is Replicase polyprotein 1ab (rep).